The chain runs to 469 residues: Protein POLLENLESS 3-LIKE 1 (469 aa).

Positions 1 to 20 are disordered; the sequence is MRRRESRGAKGGGFLTPPPS. TPR repeat units lie at residues 88–121, 124–157, and 184–217; these read DSAL…CPFE, DSID…LEQD, and ARIL…EPDN. The stretch at 139–191 forms a coiled coil; sequence RITEVAELLEHKLRTLEQDKHYGGRIKIAKRSHEEQNNKTIEQEKARILGNLA. Polar residues predominate over residues 314–338; it reads NIHKTNSHASSESVEQNSPGLTTQP. A disordered region spans residues 314–339; that stretch reads NIHKTNSHASSESVEQNSPGLTTQPR.

This sequence belongs to the MS5 protein family. In terms of tissue distribution, expressed in floral and vegetative organs. Also barely detectable in leaves and stems.

The protein resides in the nucleus. Its function is as follows. Probably involved in the regulation of cell division. This chain is Protein POLLENLESS 3-LIKE 1, found in Arabidopsis thaliana (Mouse-ear cress).